A 227-amino-acid chain; its full sequence is Cytochrome c oxidase subunit 2 (227 aa).

Topologically, residues 1–14 are mitochondrial intermembrane; sequence MAHATQVGLQDATS. Residues 15–45 form a helical membrane-spanning segment; that stretch reads PIMEELISFHDHALMIIFLISFLVLYALFLT. Residues 46 to 59 lie on the Mitochondrial matrix side of the membrane; sequence LTTKLTNTNITDAQ. A helical transmembrane segment spans residues 60-87; that stretch reads EMETVWTILPAIILVLIALPSLRILYLT. At 88–227 the chain is on the mitochondrial intermembrane side; sequence DEINDPSFTI…IFEMGPVFTL (140 aa). Cu cation-binding residues include H161, C196, E198, C200, H204, and M207. E198 is a Mg(2+) binding site.

This sequence belongs to the cytochrome c oxidase subunit 2 family. In terms of assembly, component of the cytochrome c oxidase (complex IV, CIV), a multisubunit enzyme composed of 14 subunits. The complex is composed of a catalytic core of 3 subunits MT-CO1, MT-CO2 and MT-CO3, encoded in the mitochondrial DNA, and 11 supernumerary subunits COX4I, COX5A, COX5B, COX6A, COX6B, COX6C, COX7A, COX7B, COX7C, COX8 and NDUFA4, which are encoded in the nuclear genome. The complex exists as a monomer or a dimer and forms supercomplexes (SCs) in the inner mitochondrial membrane with NADH-ubiquinone oxidoreductase (complex I, CI) and ubiquinol-cytochrome c oxidoreductase (cytochrome b-c1 complex, complex III, CIII), resulting in different assemblies (supercomplex SCI(1)III(2)IV(1) and megacomplex MCI(2)III(2)IV(2)). Found in a complex with TMEM177, COA6, COX18, COX20, SCO1 and SCO2. Interacts with TMEM177 in a COX20-dependent manner. Interacts with COX20. Interacts with COX16. It depends on Cu cation as a cofactor.

It localises to the mitochondrion inner membrane. It catalyses the reaction 4 Fe(II)-[cytochrome c] + O2 + 8 H(+)(in) = 4 Fe(III)-[cytochrome c] + 2 H2O + 4 H(+)(out). In terms of biological role, component of the cytochrome c oxidase, the last enzyme in the mitochondrial electron transport chain which drives oxidative phosphorylation. The respiratory chain contains 3 multisubunit complexes succinate dehydrogenase (complex II, CII), ubiquinol-cytochrome c oxidoreductase (cytochrome b-c1 complex, complex III, CIII) and cytochrome c oxidase (complex IV, CIV), that cooperate to transfer electrons derived from NADH and succinate to molecular oxygen, creating an electrochemical gradient over the inner membrane that drives transmembrane transport and the ATP synthase. Cytochrome c oxidase is the component of the respiratory chain that catalyzes the reduction of oxygen to water. Electrons originating from reduced cytochrome c in the intermembrane space (IMS) are transferred via the dinuclear copper A center (CU(A)) of subunit 2 and heme A of subunit 1 to the active site in subunit 1, a binuclear center (BNC) formed by heme A3 and copper B (CU(B)). The BNC reduces molecular oxygen to 2 water molecules using 4 electrons from cytochrome c in the IMS and 4 protons from the mitochondrial matrix. The protein is Cytochrome c oxidase subunit 2 (MT-CO2) of Hylobates lar (Lar gibbon).